A 67-amino-acid chain; its full sequence is LPS-assembly lipoprotein LptM (67 aa).

The signal sequence occupies residues 1-19 (MKNVFKALTVLLTLFSLTG). A lipid anchor (N-palmitoyl cysteine) is attached at Cys20. Cys20 carries S-diacylglycerol cysteine lipidation. The disordered stretch occupies residues 26-67 (LYFPPADKNAPPPTKPVETQTQSTVPDKNDRATGDGPSQVNY). Polar residues predominate over residues 42–51 (VETQTQSTVP).

This sequence belongs to the LptM family. In terms of assembly, interacts with the outer membrane embedded portion of the LPS translocon formed by LptD and LptE (LptDE).

The protein resides in the cell outer membrane. Component of the lipopolysaccharide (LPS) transport (Lpt) pathway that promotes efficient assembly of the outer membrane LPS translocon (LptDE) by the BAM complex. Facilitates oxidative maturation of LptD by stabilizing a conformation of the LPS translocon in which LptD can efficiently acquire native disulfide bonds, thereby activating the LPS translocon. The sequence is that of LPS-assembly lipoprotein LptM from Escherichia coli O157:H7.